The primary structure comprises 962 residues: Protease 3 (962 aa).

The signal sequence occupies residues 1–23 (MPRSTWFKALLLLVALWAPLSQA). A Zn(2+)-binding site is contributed by His-88. Glu-91 acts as the Proton acceptor in catalysis. Zn(2+) is bound by residues His-92 and Glu-169.

This sequence belongs to the peptidase M16 family. In terms of assembly, monomer. The cofactor is Zn(2+).

It localises to the periplasm. It catalyses the reaction Preferential cleavage of 16-Tyr-|-Leu-17 and 25-Phe-|-Tyr-26 bonds of oxidized insulin B chain. Also acts on other substrates of Mw less than 7 kDa such as insulin and glucagon.. Its function is as follows. Endopeptidase that degrades small peptides of less than 7 kDa, such as glucagon and insulin. This is Protease 3 (ptrA) from Escherichia coli (strain K12).